The chain runs to 348 residues: Lipoyl synthase, mitochondrial (348 aa).

[4Fe-4S] cluster is bound by residues C105, C110, C116, C136, C140, and C143. In terms of domain architecture, Radical SAM core spans E121–L341.

The protein belongs to the radical SAM superfamily. Lipoyl synthase family. [4Fe-4S] cluster is required as a cofactor.

It is found in the mitochondrion. The catalysed reaction is [[Fe-S] cluster scaffold protein carrying a second [4Fe-4S](2+) cluster] + N(6)-octanoyl-L-lysyl-[protein] + 2 oxidized [2Fe-2S]-[ferredoxin] + 2 S-adenosyl-L-methionine + 4 H(+) = [[Fe-S] cluster scaffold protein] + N(6)-[(R)-dihydrolipoyl]-L-lysyl-[protein] + 4 Fe(3+) + 2 hydrogen sulfide + 2 5'-deoxyadenosine + 2 L-methionine + 2 reduced [2Fe-2S]-[ferredoxin]. Its pathway is protein modification; protein lipoylation via endogenous pathway; protein N(6)-(lipoyl)lysine from octanoyl-[acyl-carrier-protein]: step 2/2. Catalyzes the radical-mediated insertion of two sulfur atoms into the C-6 and C-8 positions of the octanoyl moiety bound to the lipoyl domains of lipoate-dependent enzymes, thereby converting the octanoylated domains into lipoylated derivatives. The protein is Lipoyl synthase, mitochondrial (LIP1) of Ricinus communis (Castor bean).